The sequence spans 142 residues: Small ribosomal subunit protein bS6 (142 aa).

The segment at 110–142 (NKKPSHAKEKHEKTEHAHSHHTEEAGSKESHSE) is disordered.

Belongs to the bacterial ribosomal protein bS6 family.

Its function is as follows. Binds together with bS18 to 16S ribosomal RNA. The sequence is that of Small ribosomal subunit protein bS6 from Helicobacter acinonychis (strain Sheeba).